The sequence spans 288 residues: Putative movement protein (288 aa).

Residues 207–288 form a disordered region; that stretch reads TGPRATLSQP…TSSRSRRVRG (82 aa).

Functionally, transports viral genome to neighboring plant cells directly through plasmosdesmata, without any budding. The movement protein allows efficient cell to cell propagation, by bypassing the host cell wall barrier (Potential). This is Putative movement protein from Cucumis melo (Muskmelon).